An 84-amino-acid polypeptide reads, in one-letter code: Small ribosomal subunit protein bS20 (84 aa).

This sequence belongs to the bacterial ribosomal protein bS20 family.

Binds directly to 16S ribosomal RNA. This is Small ribosomal subunit protein bS20 from Bacteroides fragilis (strain ATCC 25285 / DSM 2151 / CCUG 4856 / JCM 11019 / LMG 10263 / NCTC 9343 / Onslow / VPI 2553 / EN-2).